The primary structure comprises 221 residues: Large ribosomal subunit protein uL3 (221 aa).

A disordered region spans residues 123 to 156 (GFAGSIKRHNQSRGPESHGSRYHRRPGSMGPIKG).

This sequence belongs to the universal ribosomal protein uL3 family. As to quaternary structure, part of the 50S ribosomal subunit. Forms a cluster with proteins L14 and L19.

Its function is as follows. One of the primary rRNA binding proteins, it binds directly near the 3'-end of the 23S rRNA, where it nucleates assembly of the 50S subunit. This chain is Large ribosomal subunit protein uL3, found in Aster yellows witches'-broom phytoplasma (strain AYWB).